The chain runs to 356 residues: MAIDENKQKALAAALGQIEKQFGKGSIMRLGEDRSMDVETISTGSLSLDIALGAGGLPMGRIVEIYGPESSGKTTLALQVIAAAQREGKTCAFIDAEHALDPIYAKKLGVDIDNLLCSQPDTGEQALEICDALTRSGAVDVIIVDSVAALTPKAEIEGEIGDSHMGLAARMMSQAMRKLAGNLKNANTLLIFINQIRMKIGVMFGNPETTTGGNALKFYASVRLDIRRIGAVKDGDVVVGSETRVKVVKNKIAAPFKQAEFQILYGEGININGELVDLGVKHKLIEKAGAWYSYNGDKIGQGKANASNYLKENPAIAAELDKKLREMLLNGGNGEQPVAAATAEFADGADETNEEF.

67 to 74 (GPESSGKT) contributes to the ATP binding site.

It belongs to the RecA family.

It localises to the cytoplasm. Can catalyze the hydrolysis of ATP in the presence of single-stranded DNA, the ATP-dependent uptake of single-stranded DNA by duplex DNA, and the ATP-dependent hybridization of homologous single-stranded DNAs. It interacts with LexA causing its activation and leading to its autocatalytic cleavage. This chain is Protein RecA, found in Yersinia pestis (strain Pestoides F).